The primary structure comprises 434 residues: Purple acid phosphatase 22 (434 aa).

The signal sequence occupies residues 1 to 22 (MKLFGLFLSFTLLFLCPFISQA). Residue asparagine 116 is glycosylated (N-linked (GlcNAc...) asparagine). Fe cation-binding residues include aspartate 148, aspartate 175, and tyrosine 178. Position 175 (aspartate 175) interacts with Zn(2+). Residues asparagine 208 and histidine 292 each contribute to the Zn(2+) site. Asparagine 208 provides a ligand contact to substrate. Histidine 302 (proton donor) is an active-site residue. Residue histidine 329 participates in Zn(2+) binding. Residue 329–331 (HVH) participates in substrate binding. Residue histidine 331 participates in Fe cation binding. N-linked (GlcNAc...) asparagine glycosylation is present at asparagine 403.

Belongs to the metallophosphoesterase superfamily. Purple acid phosphatase family. Homodimer. Fe cation is required as a cofactor. Zn(2+) serves as cofactor. In terms of tissue distribution, expressed in roots, stems, leaves, flowers and siliques.

It is found in the secreted. The catalysed reaction is a phosphate monoester + H2O = an alcohol + phosphate. The chain is Purple acid phosphatase 22 (PAP22) from Arabidopsis thaliana (Mouse-ear cress).